We begin with the raw amino-acid sequence, 203 residues long: CASP-like protein 5A2 (203 aa).

Topologically, residues 1-63 are cytoplasmic; it reads MRASRPVVHP…KDPPGAPGTP (63 aa). The disordered stretch occupies residues 39 to 58; the sequence is AAHGGENAQPRGVRMKDPPG. Residues 64–84 form a helical membrane-spanning segment; the sequence is GGLGLRLVQAFFAAAALAVMA. The Extracellular portion of the chain corresponds to 85–94; sequence STDDFPSVSA. The chain crosses the membrane as a helical span at residues 95–115; the sequence is FCYLVAAAILQCLWSLSLAVV. The Cytoplasmic portion of the chain corresponds to 116-139; the sequence is DIYALLVKRSLRNPQAVCIFTIGD. The helical transmembrane segment at 140–160 threads the bilayer; the sequence is GITGTLTLGAACASAGITVLI. The Extracellular segment spans residues 161-177; sequence GNDLNICANNHCASFET. The chain crosses the membrane as a helical span at residues 178–198; the sequence is ATAMAFISWFALAPSCVLNFW. The Cytoplasmic portion of the chain corresponds to 199–203; that stretch reads SMASR.

It belongs to the Casparian strip membrane proteins (CASP) family. Homodimer and heterodimers.

It localises to the cell membrane. The polypeptide is CASP-like protein 5A2 (Oryza sativa subsp. indica (Rice)).